A 1100-amino-acid polypeptide reads, in one-letter code: DNA-directed RNA polymerase subunit beta (1100 aa).

The tract at residues 1064–1100 is disordered; sequence YEEDKEVDLMADVNQRRTPSRPTYESMSVGDIDDDDD. Positions 1079 to 1089 are enriched in polar residues; that stretch reads RRTPSRPTYES.

Belongs to the RNA polymerase beta chain family. In cyanobacteria the RNAP catalytic core is composed of 2 alpha, 1 beta, 1 beta', 1 gamma and 1 omega subunit. When a sigma factor is associated with the core the holoenzyme is formed, which can initiate transcription.

The enzyme catalyses RNA(n) + a ribonucleoside 5'-triphosphate = RNA(n+1) + diphosphate. Its function is as follows. DNA-dependent RNA polymerase catalyzes the transcription of DNA into RNA using the four ribonucleoside triphosphates as substrates. The chain is DNA-directed RNA polymerase subunit beta from Synechococcus elongatus (strain ATCC 33912 / PCC 7942 / FACHB-805) (Anacystis nidulans R2).